Here is a 449-residue protein sequence, read N- to C-terminus: MDRVYEIPEEPNVVPISSLEEDVIRGPNPRFTFPFSILFSTFLYCGEAASALYMVRIYRKNNETFWMTYTFSFFMFSSIMVQLTLIFVHRDLAKDRPLSLFMHLILLGPVIRCLEAMIKYLTLWKKEGQEEPYVSLTRKKMLIAGQEVLIEWEVGHSIRTLAMHRNAYKRMSQIQAFLGSVPQLTYQLYVSLISAEVPLGRAVLMAFSLISVTYGATLCNMLAIQIKYDDYKIRLGPLEVLCITVWRTLEITSRLVILVLFSATLKLKAVPFLVLNFLIILFEPWVKFWRSGAQMPNNIEKNFSRVGTLVVLISVTILYAGINFSCWSAMQLKLADRDLVDKGQNWGHMGLHYSVRLVENVIMVLVFKYFGVKVLLNYCHSLIAVQLIIAYLISIGVMLLFFQYLHPLRSLFTNNVVDYLHCICCRRPRPERVENSETSCEADTTQSIV.

10 consecutive transmembrane segments (helical) span residues 35–55 (FSIL…LYMV), 68–88 (TYTF…LIFV), 98–118 (LSLF…EAMI), 174–194 (IQAF…SLIS), 204–224 (LMAF…MLAI), 241–261 (LCIT…LVLF), 269–289 (AVPF…VKFW), 306–326 (VGTL…NFSC), 357–377 (LVEN…VLLN), and 382–402 (LIAV…LLFF).

Belongs to the XK family.

It is found in the membrane. In Mus musculus (Mouse), this protein is XK-related protein 2 (Xkrx).